A 79-amino-acid polypeptide reads, in one-letter code: D-alanyl carrier protein (79 aa).

The Carrier domain occupies 1–77; sequence MDIKSEVIEI…KIIAGIVELQ (77 aa). Position 35 is an O-(pantetheine 4'-phosphoryl)serine (Ser35).

Belongs to the DltC family. In terms of processing, 4'-phosphopantetheine is transferred from CoA to a specific serine of apo-DCP.

The protein localises to the cytoplasm. The protein operates within cell wall biogenesis; lipoteichoic acid biosynthesis. In terms of biological role, carrier protein involved in the D-alanylation of lipoteichoic acid (LTA). The loading of thioester-linked D-alanine onto DltC is catalyzed by D-alanine--D-alanyl carrier protein ligase DltA. The DltC-carried D-alanyl group is further transferred to cell membrane phosphatidylglycerol (PG) by forming an ester bond, probably catalyzed by DltD. D-alanylation of LTA plays an important role in modulating the properties of the cell wall in Gram-positive bacteria, influencing the net charge of the cell wall. The protein is D-alanyl carrier protein of Streptococcus pneumoniae serotype 2 (strain D39 / NCTC 7466).